The chain runs to 68 residues: Protein P34 (68 aa).

The next 2 helical transmembrane spans lie at F4–L24 and G41–M61.

It localises to the virion membrane. This chain is Protein P34 (XXXIV), found in Acinetobacter calcoaceticus (Arthrobacter siderocapsulatus).